A 186-amino-acid polypeptide reads, in one-letter code: Adenylate kinase (186 aa).

Residue 10–15 (GVGKGT) participates in ATP binding. The NMP stretch occupies residues 30–59 (STGDIFRYNIKNKTELGLEAMSYTDKGELV). AMP is bound by residues threonine 31, arginine 36, 57–59 (ELV), 85–88 (GYPR), and glutamine 92. Positions 126–136 (KRAAEQGRADD) are LID. Residue arginine 127 coordinates ATP. AMP-binding residues include arginine 133 and arginine 144. Glycine 172 provides a ligand contact to ATP.

The protein belongs to the adenylate kinase family. In terms of assembly, monomer.

The protein resides in the cytoplasm. It carries out the reaction AMP + ATP = 2 ADP. The protein operates within purine metabolism; AMP biosynthesis via salvage pathway; AMP from ADP: step 1/1. Its function is as follows. Catalyzes the reversible transfer of the terminal phosphate group between ATP and AMP. Plays an important role in cellular energy homeostasis and in adenine nucleotide metabolism. This Bifidobacterium longum (strain NCC 2705) protein is Adenylate kinase.